Here is a 399-residue protein sequence, read N- to C-terminus: Acetate kinase (399 aa).

Asn-10 is a binding site for Mg(2+). Lys-17 is an ATP binding site. Arg-91 serves as a coordination point for substrate. Asp-148 serves as the catalytic Proton donor/acceptor. ATP is bound by residues 208 to 212 (HLGNG), 283 to 285 (DCR), and 331 to 335 (GIGEN). Glu-385 contributes to the Mg(2+) binding site.

It belongs to the acetokinase family. In terms of assembly, homodimer. Mg(2+) is required as a cofactor. It depends on Mn(2+) as a cofactor.

It localises to the cytoplasm. The enzyme catalyses acetate + ATP = acetyl phosphate + ADP. The protein operates within metabolic intermediate biosynthesis; acetyl-CoA biosynthesis; acetyl-CoA from acetate: step 1/2. Catalyzes the formation of acetyl phosphate from acetate and ATP. Can also catalyze the reverse reaction. In Shewanella sp. (strain ANA-3), this protein is Acetate kinase.